The chain runs to 393 residues: DNA-directed RNA polymerase subunit Rpo1C (393 aa).

It belongs to the RNA polymerase beta' chain family. Part of the RNA polymerase complex.

The protein resides in the cytoplasm. The enzyme catalyses RNA(n) + a ribonucleoside 5'-triphosphate = RNA(n+1) + diphosphate. Its function is as follows. DNA-dependent RNA polymerase (RNAP) catalyzes the transcription of DNA into RNA using the four ribonucleoside triphosphates as substrates. Forms part of the jaw domain. In Thermococcus celer, this protein is DNA-directed RNA polymerase subunit Rpo1C.